Here is a 292-residue protein sequence, read N- to C-terminus: uncharacterized protein (292 aa).

Residues 175–197 (VLNFYFTALPYAIDGIISGIGVF) form a helical membrane-spanning segment.

It localises to the membrane. This is an uncharacterized protein from Methanocaldococcus jannaschii (strain ATCC 43067 / DSM 2661 / JAL-1 / JCM 10045 / NBRC 100440) (Methanococcus jannaschii).